The following is a 65-amino-acid chain: Weak toxin CM-10 (65 aa).

5 disulfide bridges follow: Cys3/Cys24, Cys6/Cys11, Cys17/Cys42, Cys46/Cys57, and Cys58/Cys63.

Belongs to the three-finger toxin family. Ancestral subfamily. Orphan group II sub-subfamily. In terms of tissue distribution, expressed by the venom gland.

It is found in the secreted. In terms of biological role, binds with low affinity to muscular (alpha-1-beta-1-delta-epsilon/CHRNA1-CHRNB1-CHRND-CHRNE) and very low affinity to neuronal (alpha-7/CHRNA7) nicotinic acetylcholine receptor (nAChR). The protein is Weak toxin CM-10 of Naja nivea (Cape cobra).